A 473-amino-acid chain; its full sequence is Sensor histidine kinase GtrS (473 aa).

Residues 1–8 (MPRSLLGR) are Cytoplasmic-facing. Residues 9 to 29 (MLLLTLLAVLVAQGLSSLFWL) traverse the membrane as a helical segment. Residues 30–197 (SHLRSSQREG…LEPEGLQPQQ (168 aa)) are Periplasmic-facing. A helical membrane pass occupies residues 198-218 (VLSIVFTSLLLLLFTGLLMHW). Positions 217 to 269 (HWQSRPLKRLARAARDLALGSPSAALEERGASELVEVARAFNTMHERIDRYLN) constitute an HAMP domain. The Cytoplasmic portion of the chain corresponds to 219–473 (QSRPLKRLAR…SLRLPRLGLE (255 aa)). One can recognise a Histidine kinase domain in the interval 277-471 (AISHDLRTPI…RVSLRLPRLG (195 aa)). Histidine 280 carries the post-translational modification Phosphohistidine; by autocatalysis.

Post-translationally, autophosphorylated.

It is found in the cell inner membrane. The enzyme catalyses ATP + protein L-histidine = ADP + protein N-phospho-L-histidine.. Its function is as follows. Member of the two-component regulatory system GtrS/GltR involved in the regulation of glucose metabolism and transport, as well as regulation of the exotoxin A gene expression. GtrS recognizes and binds 2-ketogluconate and 6-phosphogluconate via its sensor domain, which accelerates GtrS autophosphorylation and concomitant transphosphorylation and regulation of the response regulator GltR. Plays a key role during bacteria-host interactions and is required for optimal colonization and dissemination in a mouse model of infection. Contributes to modulation of the type III secretion system (T3SS) in response to host cells via the regulation of the OprB transport system. In Pseudomonas aeruginosa (strain ATCC 15692 / DSM 22644 / CIP 104116 / JCM 14847 / LMG 12228 / 1C / PRS 101 / PAO1), this protein is Sensor histidine kinase GtrS.